We begin with the raw amino-acid sequence, 224 residues long: MTQDQLKQAVAQAAVDFILPKLDDKSIVGVGTGSTANCFIDALAQHKGAFDGAVASSEATAARLKGHGIPVYELNTVSNLEFYVDGADESDEHLNLIKGGGAALTREKIVAAVAQTFICIADASKLVPVLGAFPLPVEVIPMARSHVARQLVKLGGDPVYREGVLTDNGNIILDVHNLQITNPVELEAQINAIVGVVTNGLFAARPADLLLLGTSEGVKTLKAE.

Substrate is bound by residues 32 to 35 (TGST), 85 to 88 (DGAD), and 98 to 101 (KGGG). Residue glutamate 107 is the Proton acceptor of the active site. Lysine 125 contacts substrate.

Belongs to the ribose 5-phosphate isomerase family. In terms of assembly, homodimer.

It catalyses the reaction aldehydo-D-ribose 5-phosphate = D-ribulose 5-phosphate. Its pathway is carbohydrate degradation; pentose phosphate pathway; D-ribose 5-phosphate from D-ribulose 5-phosphate (non-oxidative stage): step 1/1. Functionally, catalyzes the reversible conversion of ribose-5-phosphate to ribulose 5-phosphate. The sequence is that of Ribose-5-phosphate isomerase A from Pseudomonas fluorescens (strain Pf0-1).